Here is a 222-residue protein sequence, read N- to C-terminus: Large ribosomal subunit protein mL64 (222 aa).

Disordered stretches follow at residues 19–46 (APGS…EDLL) and 188–222 (KRLK…APSS). Positions 25–36 (YRARPPPRRRPG) are enriched in basic residues. Residues 99–212 (MQESLRVKQL…AAALAAAVAQ (114 aa)) adopt a coiled-coil conformation. Positions 184 to 200 (KKERKRLKEEKQKRKKE) match the Nuclear localization signal motif. The span at 203–212 (AAALAAAVAQ) shows a compositional bias: low complexity.

This sequence belongs to the mitochondrion-specific ribosomal protein mL64 family. In terms of assembly, component of the mitochondrial large ribosomal subunit (mt-LSU). Mature mammalian 55S mitochondrial ribosomes consist of a small (28S) and a large (39S) subunit. The 28S small subunit contains a 12S ribosomal RNA (12S mt-rRNA) and 30 different proteins. The 39S large subunit contains a 16S rRNA (16S mt-rRNA), a copy of mitochondrial valine transfer RNA (mt-tRNA(Val)), which plays an integral structural role, and 52 different proteins. Interacts with GADD45A, GADD45B and GADD45G. Interacts with NR4A1 via the NR4A1 AB domain. Interacts with ATAD3A and ATAD3B. (Microbial infection) Interacts with the human papilloma virus type 16 (HPV 16) minor capsid protein L2. Widely expressed. Highly expressed in the thyroid gland, heart, lymph nodes, trachea and adrenal tissues. Expressed at lower level in liver skeletal muscle, kidney, pancreas, testis, ovary and stomach. Barely detectable in adrenal adenoma and papillary thyroid cancer.

The protein localises to the mitochondrion. It localises to the nucleus. Its function is as follows. Acts as a negative regulator of G1 to S cell cycle phase progression by inhibiting cyclin-dependent kinases. Inhibitory effects are additive with GADD45 proteins but also occur in the absence of GADD45 proteins. Acts as a repressor of the orphan nuclear receptor NR4A1 by inhibiting AB domain-mediated transcriptional activity. May be involved in the hormone-mediated regulation of NR4A1 transcriptional activity. May play a role in mitochondrial protein synthesis. The chain is Large ribosomal subunit protein mL64 (GADD45GIP1) from Homo sapiens (Human).